The primary structure comprises 242 residues: DNA repair protein RecO (242 aa).

It belongs to the RecO family. Monomer.

In terms of biological role, involved in DNA repair and RecF pathway recombination. The sequence is that of DNA repair protein RecO from Salmonella agona (strain SL483).